Reading from the N-terminus, the 341-residue chain is MTKQIVTGIIGAGRIGKLHVQNISRIPHMKIKAISDIQASRIKSWADSHQIEYITSDYRDLLHDPDIDAIFICSPTAVHAQMIKEAAEAKKHIFCEKPVSFSLDETSEALAAVRKHGVTLQVGFNRRFDPHFKKIKTIVENGEIGTPHLLKITSRDPEPPNIDYVRTSGGLFMDMSIHDFDMARYIMGSEVTEVYAKGAALVNPSFAELGDIDTAVITLTFENGAMAVIDNSRQAVYGYDQRVEVFGTKGSAAADNSRPTTVEVSTADFVMKDKPHFFFLERYKDSYEEEILRFAEAIGTNQETPCTGNDGLQAGRIARAAQQSLAFGMPVSIEHTEKIAF.

Belongs to the Gfo/Idh/MocA family.

This is an uncharacterized protein from Bacillus subtilis (strain 168).